The sequence spans 199 residues: MARCKS-related protein (199 aa).

The interval M1 to E199 is disordered. Residue G2 is the site of N-myristoyl glycine attachment. T14 is subject to Phosphothreonine. The span at E16–A26 shows a compositional bias: low complexity. Residues S22, S36, and S48 each carry the phosphoserine modification. Positions G53–A64 are enriched in low complexity. S71 is subject to Phosphoserine. A compositionally biased stretch (basic and acidic residues) spans A76 to T85. At T85 the chain carries Phosphothreonine. The segment covering P86–F98 has biased composition (basic residues). The interval K87–K110 is effector domain involved in lipid-binding and calmodulin-binding. Phosphoserine; by PKC is present on residues S93, S101, and S104. S119 carries the phosphoserine modification. The residue at position 120 (S120) is a Phosphoserine; by MAPK8. S135 is subject to Phosphoserine. T148 bears the Phosphothreonine; by MAPK8 mark. The residue at position 151 (S151) is a Phosphoserine. The span at A156–G167 shows a compositional bias: low complexity. The residue at position 170 (T170) is a Phosphothreonine. The segment covering S181–E199 has biased composition (low complexity). Residue T182 is modified to Phosphothreonine; by MAPK8. T191 carries the phosphothreonine modification.

The protein belongs to the MARCKS family. As to quaternary structure, binds to filamentous actin (F-actin), but not to monomeric G-actin, independently of its phosphorylation status. Interacts with calmodulin. Phosphorylated. Phosphorylation at Ser-120 and Thr-182 is non-redundantly catalyzed by MAPK8 in vivo. Phosphorylation at Thr-148 is preferentially catalyzed by MAPK8 in vivo, but this modification can also be catalyzed by other kinases in the absence of MAPK8. May be phosphorylated by protein kinase C, which disrupts the interaction with calmodulin.

Its subcellular location is the cytoplasm. The protein localises to the cytoskeleton. It localises to the cell membrane. Its function is as follows. Controls cell movement by regulating actin cytoskeleton homeostasis and filopodium and lamellipodium formation. When unphosphorylated, induces cell migration. When phosphorylated by MAPK8, induces actin bundles formation and stabilization, thereby reducing actin plasticity, hence restricting cell movement, including neuronal migration. May be involved in coupling the protein kinase C and calmodulin signal transduction systems. In Oryctolagus cuniculus (Rabbit), this protein is MARCKS-related protein (MARCKSL1).